The chain runs to 1214 residues: Protein argonaute-2 (1214 aa).

The tract at residues 1–412 (MGKKDKNKKG…GSIKRGTIGK (412 aa)) is disordered. Composition is skewed to low complexity over residues 18–93 (PQPQ…QQKS) and 107–117 (KQQVQGWTKQG). Composition is skewed to gly residues over residues 118–131 (QQGG…GQDG), 141–154 (QQGG…GQEG), 164–177 (QQGG…GQEG), 187–200 (QQGG…GQEG), 210–223 (QQGG…GQEG), 233–246 (QQGG…GQEG), and 256–269 (QQGG…GQEG). Residues 270 to 282 (GYQQRPPGQQQGG) are compositionally biased toward low complexity. Gly residues-rich tracts occupy residues 302-315 (QQGG…GQEG), 325-338 (QQGG…GQEG), and 348-361 (QQGG…GQEG). Over residues 362-394 (GYQQRPPGQQPNQTQSQGQYQSRGPPQQQQAAP) the composition is skewed to low complexity. The 110-residue stretch at 608–717 (LERFSLKAKI…LPIELCSIEE (110 aa)) folds into the PAZ domain. An interaction with guide RNA region spans residues 681-686 (YFHSRN). The Piwi domain maps to 885-1186 (LAIVIIPQFR…ARGRVYLTGT (302 aa)). Residues Asp-965 and Asp-1037 each contribute to the a divalent metal cation site. Interaction with guide RNA stretches follow at residues 1075–1076 (KR), 1119–1127 (HQAIQGTAK), and 1156–1178 (FPRC…VAAR). A divalent metal cation is bound at residue His-1173.

The protein belongs to the argonaute family. Ago subfamily. As to quaternary structure, interacts with Fmr1, Dcr-1 and vig to form the RNA-induced silencing complex (RISC), a ribonucleoprotein (RNP) complex involved in translation regulation, other components of the complex are RpL5, RpL11 and Rm62. As part of the RISC complex, interacts with Tudor-SN. Interacts with Taf11. (Microbial infection) Interacts with cricket paralysis virus protein 1A; this interaction may block the RISC activity. Mg(2+) serves as cofactor. The cofactor is Mn(2+).

It is found in the nucleus. The protein localises to the cytoplasm. Its subcellular location is the cytoplasmic ribonucleoprotein granule. Functionally, essential for RNA interference (RNAi); double-stranded RNA induces potent and specific gene silencing. RNAi is mediated by the RNA-induced silencing complex (RISC), a sequence-specific, multicomponent nuclease that destroys or silences messenger RNAs homologous to the silencing trigger. This Drosophila melanogaster (Fruit fly) protein is Protein argonaute-2.